Here is a 373-residue protein sequence, read N- to C-terminus: Flagellar P-ring protein (373 aa).

The signal sequence occupies residues 1-30; it reads MTNRWSFDVKKNLVTLILTWLCLSISTAQA.

It belongs to the FlgI family. As to quaternary structure, the basal body constitutes a major portion of the flagellar organelle and consists of four rings (L,P,S, and M) mounted on a central rod.

It localises to the periplasm. It is found in the bacterial flagellum basal body. In terms of biological role, assembles around the rod to form the L-ring and probably protects the motor/basal body from shearing forces during rotation. This Aliivibrio salmonicida (strain LFI1238) (Vibrio salmonicida (strain LFI1238)) protein is Flagellar P-ring protein.